The following is a 312-amino-acid chain: Formimidoylglutamase (312 aa).

Mn(2+) is bound by residues H123, D152, H154, D156, C243, and D245.

Belongs to the arginase family. Mn(2+) serves as cofactor.

It carries out the reaction N-formimidoyl-L-glutamate + H2O = formamide + L-glutamate. It functions in the pathway amino-acid degradation; L-histidine degradation into L-glutamate; L-glutamate from N-formimidoyl-L-glutamate (hydrolase route): step 1/1. Its function is as follows. Catalyzes the conversion of N-formimidoyl-L-glutamate to L-glutamate and formamide. The polypeptide is Formimidoylglutamase (Pseudomonas fluorescens (strain ATCC BAA-477 / NRRL B-23932 / Pf-5)).